The chain runs to 314 residues: Mevalonate kinase (314 aa).

103–109 (GLGTSAA) is an ATP binding site. Asp-150 functions as the Proton acceptor in the catalytic mechanism.

The protein belongs to the GHMP kinase family. Mevalonate kinase subfamily. As to quaternary structure, homodimer. Mg(2+) serves as cofactor.

The protein resides in the cytoplasm. The enzyme catalyses (R)-mevalonate + ATP = (R)-5-phosphomevalonate + ADP + H(+). It functions in the pathway isoprenoid biosynthesis; isopentenyl diphosphate biosynthesis via mevalonate pathway; isopentenyl diphosphate from (R)-mevalonate: step 1/3. Catalyzes the phosphorylation of (R)-mevalonate (MVA) to (R)-mevalonate 5-phosphate (MVAP). Functions in the mevalonate (MVA) pathway leading to isopentenyl diphosphate (IPP), a key precursor for the biosynthesis of isoprenoid compounds such as archaeal membrane lipids. This is Mevalonate kinase from Saccharolobus solfataricus (strain ATCC 35092 / DSM 1617 / JCM 11322 / P2) (Sulfolobus solfataricus).